The chain runs to 219 residues: Probable transaldolase (219 aa).

The Schiff-base intermediate with substrate role is filled by K83.

The protein belongs to the transaldolase family. Type 3B subfamily.

Its subcellular location is the cytoplasm. The enzyme catalyses D-sedoheptulose 7-phosphate + D-glyceraldehyde 3-phosphate = D-erythrose 4-phosphate + beta-D-fructose 6-phosphate. The protein operates within carbohydrate degradation; pentose phosphate pathway; D-glyceraldehyde 3-phosphate and beta-D-fructose 6-phosphate from D-ribose 5-phosphate and D-xylulose 5-phosphate (non-oxidative stage): step 2/3. Transaldolase is important for the balance of metabolites in the pentose-phosphate pathway. The polypeptide is Probable transaldolase (Cereibacter sphaeroides (strain ATCC 17025 / ATH 2.4.3) (Rhodobacter sphaeroides)).